Consider the following 292-residue polypeptide: S-adenosyl-L-methionine-dependent Diels-Alderase iccD (292 aa).

A helical membrane pass occupies residues 240–262 (LPVVRMFYVVLLVPYLFVRLLGI).

Belongs to the class I-like SAM-binding methyltransferase superfamily. Erg6/SMT family. S-adenosyl-L-methionine serves as cofactor.

The protein localises to the membrane. The enzyme catalyses 3-[(2E,4E,8S,10E,12Z)-4,8-dimethyltetradeca-2,4,10,12-tetraenoyl]-4-hydroxy-5-(4-hydroxyphenyl)-1,2-dihydropyridin-2-one = 8-epi-ilicicolin H. Its pathway is mycotoxin biosynthesis. Functionally, S-adenosyl-l-methionine-dependent Diels-Alderase; part of the gene cluster that mediates the biosynthesis of ilicicolin H, a 4-hydroxy-2-pyridonealkaloid that has potent and broad antifungal activities by inhibiting the mitochondrial respiration chain. IccD catalyzes the Diels-Alder reaction that converts the acyclic 2-pyridone intermediate to 8-epi-ilicicolin H. The biosynthesis of ilicicolin H starts with formation of the tetramic acid by the hybrid PKS-NRPS synthetase iccA with the partnering trans-enoyl reductase iccB since iccA lacks a designated enoylreductase (ER) domain. The cytochrome P450 monooxygenase iccC then catalyzes the ring expansion of the tetramate to the acyclic 2-pyridone. The pericyclase iccD further converts the acyclic 2-pyridone into 8-epi-ilicicolin H. Finally, the epimerase iccE converts 8-epi-ilicicolin H into ilicicolin H via epimerization. IccA to iccE are sufficient for ilicicolin H biosynthesis and the roles of the remaining enzymes, iccF, iccG and iccH within the pathway have still to be determined. The polypeptide is S-adenosyl-L-methionine-dependent Diels-Alderase iccD (Talaromyces variabilis (Penicillium variabile)).